The primary structure comprises 304 residues: UDP-N-acetylenolpyruvoylglucosamine reductase (304 aa).

In terms of domain architecture, FAD-binding PCMH-type spans 31–196 (KVGGPADYLA…ISAKFNLKPG (166 aa)). Arginine 175 is an active-site residue. The active-site Proton donor is serine 225. Glutamate 295 is an active-site residue.

It belongs to the MurB family. Requires FAD as cofactor.

The protein localises to the cytoplasm. It carries out the reaction UDP-N-acetyl-alpha-D-muramate + NADP(+) = UDP-N-acetyl-3-O-(1-carboxyvinyl)-alpha-D-glucosamine + NADPH + H(+). It participates in cell wall biogenesis; peptidoglycan biosynthesis. In terms of biological role, cell wall formation. The chain is UDP-N-acetylenolpyruvoylglucosamine reductase from Streptococcus thermophilus (strain CNRZ 1066).